Consider the following 226-residue polypeptide: 7-cyano-7-deazaguanine synthase (226 aa).

9 to 19 (LSGGLDSTVAT) serves as a coordination point for ATP. Zn(2+) is bound by residues Cys192, Cys200, Cys203, and Cys206.

The protein belongs to the QueC family. It depends on Zn(2+) as a cofactor.

The catalysed reaction is 7-carboxy-7-deazaguanine + NH4(+) + ATP = 7-cyano-7-deazaguanine + ADP + phosphate + H2O + H(+). Its pathway is purine metabolism; 7-cyano-7-deazaguanine biosynthesis. Its function is as follows. Catalyzes the ATP-dependent conversion of 7-carboxy-7-deazaguanine (CDG) to 7-cyano-7-deazaguanine (preQ(0)). This chain is 7-cyano-7-deazaguanine synthase, found in Methanosphaera stadtmanae (strain ATCC 43021 / DSM 3091 / JCM 11832 / MCB-3).